The sequence spans 29 residues: Small toxic protein ZorO (29 aa).

A helical transmembrane segment spans residues valine 10–leucine 27.

It is found in the cell inner membrane. In terms of biological role, toxic component of a type I toxin-antitoxin (TA) system. Expression in the absence of its cognate antitoxin (small sRNA orzO) leads to cell stasis and a decrease in colony-forming units. Repression of ZorO toxicity requires base pairing between zorO mRNA and sRNA OrzO, as well as RNase III (rnc), suggesting the mRNA is degraded. Base pairing occurs between 18 bases in the 5' UTR of zorO mRNA and the 5' end of OrzO sRNA. sRNA OrzP, which differs only in 4 of these 18 bases, does not repress ZorO toxicity. Integration of the protein into the inner membrane damages membrane integrity and affects membrane potential. It leads to increased levels of hydroxyl radicals. The sequence is that of Small toxic protein ZorO from Escherichia coli O157:H7.